Reading from the N-terminus, the 73-residue chain is Translation initiation factor IF-1 (73 aa).

Positions 1–73 (MAKKDGVIEL…ARGRIVYRYK (73 aa)) constitute an S1-like domain.

Belongs to the IF-1 family. As to quaternary structure, component of the 30S ribosomal translation pre-initiation complex which assembles on the 30S ribosome in the order IF-2 and IF-3, IF-1 and N-formylmethionyl-tRNA(fMet); mRNA recruitment can occur at any time during PIC assembly.

Its subcellular location is the cytoplasm. One of the essential components for the initiation of protein synthesis. Stabilizes the binding of IF-2 and IF-3 on the 30S subunit to which N-formylmethionyl-tRNA(fMet) subsequently binds. Helps modulate mRNA selection, yielding the 30S pre-initiation complex (PIC). Upon addition of the 50S ribosomal subunit IF-1, IF-2 and IF-3 are released leaving the mature 70S translation initiation complex. The sequence is that of Translation initiation factor IF-1 from Tropheryma whipplei (strain TW08/27) (Whipple's bacillus).